The chain runs to 251 residues: Small ribosomal subunit protein uS2 (251 aa).

It belongs to the universal ribosomal protein uS2 family.

This is Small ribosomal subunit protein uS2 from Deinococcus deserti (strain DSM 17065 / CIP 109153 / LMG 22923 / VCD115).